We begin with the raw amino-acid sequence, 255 residues long: Folate receptor alpha (255 aa).

A signal peptide spans 1–24 (MAHLMTVQLLLLVMWMAECAQSRA). 8 cysteine pairs are disulfide-bonded: cysteine 35–cysteine 63, cysteine 55–cysteine 103, cysteine 64–cysteine 107, cysteine 87–cysteine 173, cysteine 94–cysteine 144, cysteine 133–cysteine 207, cysteine 137–cysteine 187, and cysteine 150–cysteine 167. Asparagine 67 is a glycosylation site (N-linked (GlcNAc...) asparagine). Folate is bound by residues aspartate 101, tyrosine 105, 122-126 (WRKER), 155-160 (HKGWNW), and serine 194. Asparagine 159 is a glycosylation site (N-linked (GlcNAc...) asparagine). Asparagine 199 carries N-linked (GlcNAc...) asparagine glycosylation. Serine 232 carries the GPI-anchor amidated serine lipid modification. The propeptide at 233 to 255 (GAGFHGTWPLLCSLSLVLLWVIS) is removed in mature form.

It belongs to the folate receptor family. In terms of processing, the secreted form is derived from the membrane-bound form either by cleavage of the GPI anchor, or/and by proteolysis catalyzed by a metalloprotease. In terms of tissue distribution, detected in kidney proximal tubules (at protein level).

The protein localises to the cell membrane. It is found in the apical cell membrane. The protein resides in the basolateral cell membrane. It localises to the secreted. Its subcellular location is the cytoplasmic vesicle. The protein localises to the clathrin-coated vesicle. It is found in the endosome. Functionally, binds to folate and reduced folic acid derivatives and mediates delivery of 5-methyltetrahydrofolate and folate analogs into the interior of cells. Has high affinity for folate and folic acid analogs at neutral pH. Exposure to slightly acidic pH after receptor endocytosis triggers a conformation change that strongly reduces its affinity for folates and mediates their release. Required for normal embryonic development and normal cell proliferation. Required for renal folate reabsorption. The protein is Folate receptor alpha (Folr1) of Mus musculus (Mouse).